A 183-amino-acid chain; its full sequence is Large ribosomal subunit protein uL6 (183 aa).

Belongs to the universal ribosomal protein uL6 family. As to quaternary structure, part of the 50S ribosomal subunit.

This protein binds to the 23S rRNA, and is important in its secondary structure. It is located near the subunit interface in the base of the L7/L12 stalk, and near the tRNA binding site of the peptidyltransferase center. This is Large ribosomal subunit protein uL6 from Chlamydia felis (strain Fe/C-56) (Chlamydophila felis).